A 939-amino-acid chain; its full sequence is MATSQYFDFAQGGGPQYSAQPPTLPLPTVGASYTAQPTPGMDPAVNPAFPPAAPAGYGGYQPHSGQDFAYGSRPQEPVPTATTMATYQDSYSYGQSAAARSYEDRPYFQSAALQSGRMTAADSGQPGTQEACGQPSPHGSHSHAQPPQQAPIVESGQPASTLSSGYTYPTATGVQPESSASIVTSYPPPSYNPTCTAYTAPSYPNYDASVYSAASPFYPPAQPPPPPGPPQQLPPPPAPAGSGSSPRADSKPPLPSKLPRPKAGPRQLQLHYCDICKISCAGPQTYREHLGGQKHRKKEAAQKTGVQPNGSPRGVQAQLHCDLCAVSCTGADAYAAHIRGSKHQKVFKLHAKLGKPIPTLEPALATESPPGAEAKPTSPTGPSVCASSRPALAKRPVASKALCEGPPEPQAAGCRPQWGKPAQPKLEGPGAPTQGGSKEAPAGCSDAQPVGPEYVEEVFSDEGRVLRFHCKLCECSFNDLNAKDLHVRGRRHRLQYRKKVNPDLPIATEPSSRARKVLEERMRKQRHLAEERLEQLRRWHAERRRLEEEPPQDVPPHAPPDWAQPLLMGRPESPASAPLQPGRRPASSDDRHVMCKHATIYPTEQELLAVQRAVSHAERALKLVSDTLAEEDRGRREEEGDKRSSVAPQTRVLKGVMRVGILAKGLLLRGDRNVRLALLCSEKPTHSLLRRIAQQLPRQLQMVTEDEYEVSSDPEANIVISSCEEPRMQVTISVTSPLMREDPSTDPGVEEPQADAGDVLSPKKCLESLAALRHARWFQARASGLQPCVIVIRVLRDLCRRVPTWGALPAWAMELLVEKAVSSAAGPLGPGDAVRRVLECVATGTLLTDGPGLQDPCERDQTDALEPMTLQEREDVTASAQHALRMLAFRQTHKVLGMDLLPPRHRLGARFRKRQRGPGEGEEGAGEKKRGRRGGEGLV.

Disordered regions lie at residues 1–72, 116–185, 217–264, 289–314, 360–389, 401–449, 545–590, and 906–939; these read MATS…AYGS, GRMT…IVTS, FYPP…PKAG, HLGG…SPRG, LEPA…ASSR, ALCE…DAQP, RLEE…SSDD, and RLGA…EGLV. Composition is skewed to polar residues over residues 137–147 and 157–184; these read PHGSHSHAQPP and QPAS…SIVT. Over residues 217–239 the composition is skewed to pro residues; sequence FYPPAQPPPPPGPPQQLPPPPAP. Residues 516-549 are a coiled coil; the sequence is KVLEERMRKQRHLAEERLEQLRRWHAERRRLEEE. In terms of domain architecture, DZF spans 570-935; the sequence is RPESPASAPL…GEKKRGRRGG (366 aa). Over residues 906–916 the composition is skewed to basic residues; the sequence is RLGARFRKRQR.

The protein is Zinc finger RNA-binding protein 2 (ZFR2) of Homo sapiens (Human).